The primary structure comprises 230 residues: Orotidine 5'-phosphate decarboxylase (230 aa).

Substrate-binding positions include Asp-11, Lys-34, Asp-61–Thr-70, Thr-117, Arg-179, Gln-188, Gly-208, and Arg-209. Catalysis depends on Lys-63, which acts as the Proton donor.

The protein belongs to the OMP decarboxylase family. Type 1 subfamily. As to quaternary structure, homodimer.

The catalysed reaction is orotidine 5'-phosphate + H(+) = UMP + CO2. The protein operates within pyrimidine metabolism; UMP biosynthesis via de novo pathway; UMP from orotate: step 2/2. Catalyzes the decarboxylation of orotidine 5'-monophosphate (OMP) to uridine 5'-monophosphate (UMP). The sequence is that of Orotidine 5'-phosphate decarboxylase from Streptococcus pyogenes serotype M49 (strain NZ131).